Reading from the N-terminus, the 403-residue chain is Alkaline protease 1 (403 aa).

A signal peptide spans 1–21 (MHSFKRSLLLLGALLPAVFGA). A propeptide spanning residues 22–124 (PVEPRRAAEK…QIWYIDALTS (103 aa)) is cleaved from the precursor. The Inhibitor I9 domain maps to 35–119 (KYIVTFKSGL…HVEEDQIWYI (85 aa)). The Peptidase S8 domain occupies 129 to 403 (PWGLGAISHK…NLLAYNGADE (275 aa)). Residues D161 and H192 each act as charge relay system in the active site. A glycan (N-linked (GlcNAc...) asparagine) is linked at N252. S348 (charge relay system) is an active-site residue.

This sequence belongs to the peptidase S8 family.

The protein resides in the secreted. The enzyme catalyses Hydrolysis of proteins with broad specificity, and of Bz-Arg-OEt &gt; Ac-Tyr-OEt. Does not hydrolyze peptide amides.. Its function is as follows. Secreted alkaline protease that allows assimilation of proteinaceous substrates. The protein is Alkaline protease 1 (alp1) of Emericella nidulans (strain FGSC A4 / ATCC 38163 / CBS 112.46 / NRRL 194 / M139) (Aspergillus nidulans).